A 437-amino-acid chain; its full sequence is GTPase Der (437 aa).

2 EngA-type G domains span residues 4-167 (PVVA…AEKD) and 175-352 (IRFS…DHQH). GTP contacts are provided by residues 10-17 (GRPNVGKS), 57-61 (DTGGI), 119-122 (NKVD), 181-188 (GRPNVGKS), 229-233 (DTAGI), and 294-297 (NKWD). The region spanning 353–437 (RRIQSAVLND…PIRLIKRRRK (85 aa)) is the KH-like domain.

This sequence belongs to the TRAFAC class TrmE-Era-EngA-EngB-Septin-like GTPase superfamily. EngA (Der) GTPase family. As to quaternary structure, associates with the 50S ribosomal subunit.

Its function is as follows. GTPase that plays an essential role in the late steps of ribosome biogenesis. The polypeptide is GTPase Der (Limosilactobacillus fermentum (strain NBRC 3956 / LMG 18251) (Lactobacillus fermentum)).